Here is a 135-residue protein sequence, read N- to C-terminus: Large ribosomal subunit protein uL16c (135 aa).

Belongs to the universal ribosomal protein uL16 family. In terms of assembly, part of the 50S ribosomal subunit.

It localises to the plastid. Its subcellular location is the chloroplast. The sequence is that of Large ribosomal subunit protein uL16c from Phaseolus vulgaris (Kidney bean).